The chain runs to 273 residues: Large ribosomal subunit protein uL2 (273 aa).

Residues 221-273 form a disordered region; that stretch reads RGTAMNPVDHPHGGGEGRNFGKHPVTPWGVQTKGKKTRHNKRTDKFIVRRRGK. Positions 253–273 are enriched in basic residues; that stretch reads KGKKTRHNKRTDKFIVRRRGK.

The protein belongs to the universal ribosomal protein uL2 family. In terms of assembly, part of the 50S ribosomal subunit. Forms a bridge to the 30S subunit in the 70S ribosome.

Its function is as follows. One of the primary rRNA binding proteins. Required for association of the 30S and 50S subunits to form the 70S ribosome, for tRNA binding and peptide bond formation. It has been suggested to have peptidyltransferase activity; this is somewhat controversial. Makes several contacts with the 16S rRNA in the 70S ribosome. In Glaesserella parasuis serovar 5 (strain SH0165) (Haemophilus parasuis), this protein is Large ribosomal subunit protein uL2.